We begin with the raw amino-acid sequence, 135 residues long: S-protein homolog 20 (135 aa).

An N-terminal signal peptide occupies residues 1 to 26; the sequence is MNGSSAFHIILSVTFMVFLFGGLCEA. Asn88 carries N-linked (GlcNAc...) asparagine glycosylation.

This sequence belongs to the plant self-incompatibility (S1) protein family.

The protein resides in the secreted. The sequence is that of S-protein homolog 20 from Arabidopsis thaliana (Mouse-ear cress).